The following is a 426-amino-acid chain: Formyl-CoA:oxalate CoA-transferase (426 aa).

CoA contacts are provided by residues 17-18 (QS), Arg38, 72-75 (LDTK), 96-98 (NFG), Arg104, and 136-139 (KVYE). The active-site Nucleophile is the Asp168. Residue 247–249 (GGQ) participates in substrate binding.

Belongs to the CoA-transferase III family. Frc subfamily. As to quaternary structure, homodimer.

It catalyses the reaction formyl-CoA + oxalate = oxalyl-CoA + formate. The protein operates within metabolic intermediate degradation; oxalate degradation; CO(2) and formate from oxalate: step 1/2. In terms of biological role, involved in the catabolism of oxalate and in the adapatation to low pH via the induction of the oxalate-dependent acid tolerance response (ATR). Catalyzes the transfer of the CoA moiety from formyl-CoA to oxalate. The protein is Formyl-CoA:oxalate CoA-transferase of Rhodopseudomonas palustris (strain BisB18).